The sequence spans 63 residues: MARYRRHSRSRSRSRYRRRRRRRSRHHNRRRTYRRSRRHSRRRRGRRRGYSRRRYSRRGRRRY.

A disordered region spans residues 1-63; the sequence is MARYRRHSRS…RYSRRGRRRY (63 aa).

The protein belongs to the protamine P1 family. As to expression, testis.

Its subcellular location is the nucleus. The protein localises to the chromosome. Functionally, protamines substitute for histones in the chromatin of sperm during the haploid phase of spermatogenesis. They compact sperm DNA into a highly condensed, stable and inactive complex. This Phascogale tapoatafa (Common wambenger) protein is Sperm protamine P1 (PRM1).